We begin with the raw amino-acid sequence, 292 residues long: Glutamate racemase (292 aa).

Substrate contacts are provided by residues 28–29 (DS) and 60–61 (YG). Catalysis depends on Cys91, which acts as the Proton donor/acceptor. 92 to 93 (NT) contributes to the substrate binding site. Residue Cys200 is the Proton donor/acceptor of the active site. Residue 201 to 202 (TH) participates in substrate binding.

It belongs to the aspartate/glutamate racemases family.

It carries out the reaction L-glutamate = D-glutamate. The protein operates within cell wall biogenesis; peptidoglycan biosynthesis. Functionally, provides the (R)-glutamate required for cell wall biosynthesis. This Trichormus variabilis (strain ATCC 29413 / PCC 7937) (Anabaena variabilis) protein is Glutamate racemase.